A 954-amino-acid chain; its full sequence is Isoleucine--tRNA ligase (954 aa).

The 'HIGH' region signature appears at 58 to 68 (PYANGDIHIGH). Residue E572 participates in L-isoleucyl-5'-AMP binding. The 'KMSKS' region signature appears at 613-617 (KMSKS). K616 lines the ATP pocket. The Zn(2+) site is built by C917, C920, C937, and C940.

The protein belongs to the class-I aminoacyl-tRNA synthetase family. IleS type 1 subfamily. As to quaternary structure, monomer. The cofactor is Zn(2+).

It is found in the cytoplasm. The catalysed reaction is tRNA(Ile) + L-isoleucine + ATP = L-isoleucyl-tRNA(Ile) + AMP + diphosphate. In terms of biological role, catalyzes the attachment of isoleucine to tRNA(Ile). As IleRS can inadvertently accommodate and process structurally similar amino acids such as valine, to avoid such errors it has two additional distinct tRNA(Ile)-dependent editing activities. One activity is designated as 'pretransfer' editing and involves the hydrolysis of activated Val-AMP. The other activity is designated 'posttransfer' editing and involves deacylation of mischarged Val-tRNA(Ile). This Photobacterium profundum (strain SS9) protein is Isoleucine--tRNA ligase.